The primary structure comprises 416 residues: UV excision repair protein RAD23 homolog B (416 aa).

One can recognise a Ubiquitin-like domain in the interval 1–79 (MQVTLKTLQQ…VVVMVTKPKA (79 aa)). Low complexity predominate over residues 83–111 (AVPATTQPSSTPSPTAVSSSPAVAAAQAP). The disordered stretch occupies residues 83-175 (AVPATTQPSS…STPGDSSRSN (93 aa)). The segment covering 112–121 (APTPALPPTS) has biased composition (pro residues). A compositionally biased stretch (low complexity) spans 122-143 (TPASTAPASTTASSEPAPAGAT). The residue at position 155 (Thr155) is a Phosphothreonine. 2 positions are modified to phosphoserine: Ser160 and Ser174. Phosphothreonine is present on Thr186. The region spanning 188–228 (QSYENMVTEIMSMGYEREQVIAALRASFNNPDRAVEYLLMG) is the UBA 1 domain. Ser199 bears the Phosphoserine mark. Tyr202 carries the phosphotyrosine modification. One can recognise an STI1 domain in the interval 274–317 (HPLEFLRNQPQFQQMRQIIQQNPSLLPALLQQIGRENPQLLQQI). Positions 333 to 356 (QEAGSQGGGGGGGGGGGGGGGGGI) are disordered. Residues 337 to 356 (SQGGGGGGGGGGGGGGGGGI) are compositionally biased toward gly residues. Residues 371–411 (PQEKEAIERLKALGFPEGLVIQAYFACEKNENLAANFLLQQ) form the UBA 2 domain.

It belongs to the RAD23 family. Component of the XPC complex composed of XPC, RAD23B and CETN2. Interacts with NGLY1 and PSMC1. Interacts with ATXN3. Interacts with AMFR. Interacts with VCP; the interaction is indirect and mediated by NGLY1.

The protein localises to the nucleus. The protein resides in the cytoplasm. Multiubiquitin chain receptor involved in modulation of proteasomal degradation. Binds to polyubiquitin chains. Proposed to be capable to bind simultaneously to the 26S proteasome and to polyubiquitinated substrates and to deliver ubiquitinated proteins to the proteasome. May play a role in endoplasmic reticulum-associated degradation (ERAD) of misfolded glycoproteins by association with PNGase and delivering deglycosylated proteins to the proteasome. In terms of biological role, involved in global genome nucleotide excision repair (GG-NER) by acting as component of the XPC complex. Cooperatively with Cetn2 appears to stabilize Xpc. May protect Xpc from proteasomal degradation. Its function is as follows. The XPC complex is proposed to represent the first factor bound at the sites of DNA damage and together with other core recognition factors, Xpa, RPA and the TFIIH complex, is part of the pre-incision (or initial recognition) complex. The XPC complex recognizes a wide spectrum of damaged DNA characterized by distortions of the DNA helix such as single-stranded loops, mismatched bubbles or single-stranded overhangs. The orientation of XPC complex binding appears to be crucial for inducing a productive NER. XPC complex is proposed to recognize and to interact with unpaired bases on the undamaged DNA strand which is followed by recruitment of the TFIIH complex and subsequent scanning for lesions in the opposite strand in a 5'-to-3' direction by the NER machinery. Cyclobutane pyrimidine dimers (CPDs) which are formed upon UV-induced DNA damage esacpe detection by the XPC complex due to a low degree of structural perurbation. Instead they are detected by the UV-DDB complex which in turn recruits and cooperates with the XPC complex in the respective DNA repair. In vitro, the Xpc:Rad23b dimer is sufficient to initiate NER; it preferentially binds to cisplatin and UV-damaged double-stranded DNA and also binds to a variety of chemically and structurally diverse DNA adducts. Xpc:Rad23b contacts DNA both 5' and 3' of a cisplatin lesion with a preference for the 5' side. Xpc:Rad23bB induces a bend in DNA upon binding. Xpc:Rad23b stimulates the activity of DNA glycosylases Tdg and Smug1. This is UV excision repair protein RAD23 homolog B (Rad23b) from Mus musculus (Mouse).